A 257-amino-acid polypeptide reads, in one-letter code: MSGGGVIRGPAGNNDCRIYVGNLPPDIRTKDIEDVFYKYGAIRDIDLKNRRGGPPFAFVEFEDPRDAEDAVYGRDGYDYDGYRLRVEFPRSGRGTGRGGGGGGGGGAPRGRYGPPSRRSEYRVIVSGLPPSGSWQDLKDHMREAGDVCYADVFRDGTGVVEFVRKEDMTYAVRKLDNTKFRSHEGETAYIRVKVDGPRSPSYGRSRSRSVVVAEAVVGATAEAAVIPQEEAEDLHATLPATADPDLVHKRSLALIFL.

Ser2 is subject to N-acetylserine. An RRM 1 domain is found at 16–91 (CRIYVGNLPP…YRLRVEFPRS (76 aa)). The interval 88-116 (FPRSGRGTGRGGGGGGGGGAPRGRYGPPS) is disordered. Positions 93–108 (RGTGRGGGGGGGGGAP) are enriched in gly residues. Residues 121-195 (YRVIVSGLPP…ETAYIRVKVD (75 aa)) form the RRM 2 domain.

It localises to the cytoplasm. The protein localises to the nucleus speckle. In terms of biological role, may play a role in preventing exon skipping, ensuring the accuracy of splicing and regulating alternative splicing. The protein is Serine/arginine-rich splicing factor 1 (SRSF1) of Gallus gallus (Chicken).